A 94-amino-acid chain; its full sequence is Small ribosomal subunit protein bS20 (94 aa).

The protein belongs to the bacterial ribosomal protein bS20 family.

Functionally, binds directly to 16S ribosomal RNA. The chain is Small ribosomal subunit protein bS20 from Acaryochloris marina (strain MBIC 11017).